Here is a 499-residue protein sequence, read N- to C-terminus: Probable dipeptidase B (499 aa).

Cys26 is a catalytic residue.

Belongs to the peptidase C69 family.

The enzyme catalyses an L-aminoacyl-L-amino acid + H2O = 2 an L-alpha-amino acid. This chain is Probable dipeptidase B (pepDB), found in Streptococcus pyogenes serotype M3 (strain ATCC BAA-595 / MGAS315).